Consider the following 93-residue polypeptide: Defensin-like protein 210 (93 aa).

The first 19 residues, 1 to 19, serve as a signal peptide directing secretion; sequence MKTIILFLTLLVISSSCTS. 3 cysteine pairs are disulfide-bonded: Cys63/Cys80, Cys66/Cys85, and Cys70/Cys87.

Belongs to the DEFL family.

It localises to the secreted. This chain is Defensin-like protein 210, found in Arabidopsis thaliana (Mouse-ear cress).